The chain runs to 269 residues: Glutamate racemase (269 aa).

Substrate-binding positions include 7–8 (DS) and 39–40 (YG). C70 functions as the Proton donor/acceptor in the catalytic mechanism. Residue 71–72 (NT) participates in substrate binding. Residue C194 is the Proton donor/acceptor of the active site. 195 to 196 (TH) is a substrate binding site.

Belongs to the aspartate/glutamate racemases family.

It catalyses the reaction L-glutamate = D-glutamate. The protein operates within cell wall biogenesis; peptidoglycan biosynthesis. Provides the (R)-glutamate required for cell wall biosynthesis. This chain is Glutamate racemase, found in Roseobacter denitrificans (strain ATCC 33942 / OCh 114) (Erythrobacter sp. (strain OCh 114)).